We begin with the raw amino-acid sequence, 108 residues long: T-cell acute lymphocytic leukemia protein 2 (108 aa).

The 53-residue stretch at 2-54 folds into the bHLH domain; the sequence is TRKIFTNTRERWRQQNVNSAFAKLRKLIPTHPPDKKLSKNETLRLAMRYINFL. A disordered region spans residues 89–108; sequence DRTLLENYQVPSPGPSHHIP.

This chain is T-cell acute lymphocytic leukemia protein 2 (TAL2), found in Homo sapiens (Human).